Consider the following 546-residue polypeptide: Glucose-6-phosphate isomerase (546 aa).

The active-site Proton donor is the glutamate 356. Catalysis depends on residues histidine 387 and lysine 507.

This sequence belongs to the GPI family.

Its subcellular location is the cytoplasm. It carries out the reaction alpha-D-glucose 6-phosphate = beta-D-fructose 6-phosphate. It functions in the pathway carbohydrate biosynthesis; gluconeogenesis. The protein operates within carbohydrate degradation; glycolysis; D-glyceraldehyde 3-phosphate and glycerone phosphate from D-glucose: step 2/4. In terms of biological role, catalyzes the reversible isomerization of glucose-6-phosphate to fructose-6-phosphate. The sequence is that of Glucose-6-phosphate isomerase from Syntrophus aciditrophicus (strain SB).